The following is a 724-amino-acid chain: Aquaglyceroporin-4 (724 aa).

Disordered stretches follow at residues 1 to 167 (MADE…SIRR), 248 to 267 (INMA…NQAD), and 302 to 396 (AHGL…DLDG). Residues 1–434 (MADEEIKPTS…VIRLRFREPL (434 aa)) are Cytoplasmic-facing. Residues 87–96 (LTGQVPQDND) are compositionally biased toward polar residues. The span at 252–265 (QQQQQQQQQQPQNQ) shows a compositional bias: low complexity. Composition is skewed to polar residues over residues 307–325 (SPTN…TAPS) and 360–370 (PSQTSQNSQNE). Residues 435–455 (AELLAVTCQLTLGFCADLVVV) traverse the membrane as a helical segment. Topologically, residues 456–472 (TSGKNASPAGNEATTDW) are extracellular. A helical membrane pass occupies residues 473-493 (AWGLASMLGIYIAGGISGAHL). The short motif at 494 to 496 (NPA) is the NPA 1 element. The Cytoplasmic segment spans residues 494–513 (NPAISIMLWIYRGFPLRKVP). A helical transmembrane segment spans residues 514–534 (MYVLAQILGAFIAALISFGLY). At 535-567 (QTNIVEYGGTDLKTSDTMGAFITYPRYPWINAS) the chain is on the extracellular side. N-linked (GlcNAc...) asparagine glycosylation occurs at Asn565. The chain crosses the membrane as a helical span at residues 568 to 588 (TSFFTEFVGTAILAVAVLALG). The Cytoplasmic portion of the chain corresponds to 589-595 (DDMNAPP). The chain crosses the membrane as a helical span at residues 596–616 (GAGMSAFILGLVITVLSMAFG). Residues 617 to 647 (YNTGAALNPSRDLGPRLALAALGYGKDLFTD) lie on the Extracellular side of the membrane. An NPA 2 motif is present at residues 624-626 (NPS). A helical membrane pass occupies residues 648-668 (VYWIWGNWCAPILGAIFGAFL). The Cytoplasmic portion of the chain corresponds to 669 to 724 (YDAAIFAGGESPVNYPRKRIKRAGHKWRKKWGVRLRKMKPAKKGEDEAYRRWKESQ).

Belongs to the MIP/aquaporin (TC 1.A.8) family.

It localises to the membrane. The catalysed reaction is H2O(in) = H2O(out). The enzyme catalyses glycerol(in) = glycerol(out). Water channel required to facilitate the transport of water across membranes. May play a role in the vegetative growth. The protein is Aquaglyceroporin-4 of Botryotinia fuckeliana (strain B05.10) (Noble rot fungus).